Here is a 330-residue protein sequence, read N- to C-terminus: Aspartate--ammonia ligase (330 aa).

This sequence belongs to the class-II aminoacyl-tRNA synthetase family. AsnA subfamily.

The protein localises to the cytoplasm. It catalyses the reaction L-aspartate + NH4(+) + ATP = L-asparagine + AMP + diphosphate + H(+). Its pathway is amino-acid biosynthesis; L-asparagine biosynthesis; L-asparagine from L-aspartate (ammonia route): step 1/1. The polypeptide is Aspartate--ammonia ligase (Haemophilus influenzae (strain 86-028NP)).